We begin with the raw amino-acid sequence, 216 residues long: Regulatory protein RecX (216 aa).

Belongs to the RecX family.

The protein localises to the cytoplasm. Its function is as follows. Modulates RecA activity. The polypeptide is Regulatory protein RecX (Clostridium tetani (strain Massachusetts / E88)).